The sequence spans 685 residues: DNA ligase (685 aa).

NAD(+) is bound by residues 48-52 (DAEYD), 97-98 (SL), and glutamate 131. Lysine 133 functions as the N6-AMP-lysine intermediate in the catalytic mechanism. The NAD(+) site is built by arginine 154, glutamate 190, lysine 304, and lysine 328. 4 residues coordinate Zn(2+): cysteine 422, cysteine 425, cysteine 440, and cysteine 445. In terms of domain architecture, BRCT spans 603–685 (PEEGPLSGRR…RLLSGEERPG (83 aa)).

This sequence belongs to the NAD-dependent DNA ligase family. LigA subfamily. The cofactor is Mg(2+). It depends on Mn(2+) as a cofactor.

The catalysed reaction is NAD(+) + (deoxyribonucleotide)n-3'-hydroxyl + 5'-phospho-(deoxyribonucleotide)m = (deoxyribonucleotide)n+m + AMP + beta-nicotinamide D-nucleotide.. Its function is as follows. DNA ligase that catalyzes the formation of phosphodiester linkages between 5'-phosphoryl and 3'-hydroxyl groups in double-stranded DNA using NAD as a coenzyme and as the energy source for the reaction. It is essential for DNA replication and repair of damaged DNA. This Rubrobacter xylanophilus (strain DSM 9941 / JCM 11954 / NBRC 16129 / PRD-1) protein is DNA ligase.